Consider the following 375-residue polypeptide: tRNA (guanine(26)-N(2))-dimethyltransferase (375 aa).

The Trm1 methyltransferase domain occupies 2–368 (KYITEGNTKL…AKLIDIVEFI (367 aa)). Positions 35, 66, 89, 116, and 117 each coordinate S-adenosyl-L-methionine.

The protein belongs to the class I-like SAM-binding methyltransferase superfamily. Trm1 family.

It carries out the reaction guanosine(26) in tRNA + 2 S-adenosyl-L-methionine = N(2)-dimethylguanosine(26) in tRNA + 2 S-adenosyl-L-homocysteine + 2 H(+). Its function is as follows. Dimethylates a single guanine residue at position 26 of a number of tRNAs using S-adenosyl-L-methionine as donor of the methyl groups. The chain is tRNA (guanine(26)-N(2))-dimethyltransferase from Methanococcus aeolicus (strain ATCC BAA-1280 / DSM 17508 / OCM 812 / Nankai-3).